We begin with the raw amino-acid sequence, 702 residues long: Polyribonucleotide nucleotidyltransferase (702 aa).

Mg(2+)-binding residues include aspartate 485 and aspartate 491. In terms of domain architecture, KH spans 552–611; it reads PRITTLKINPEKIRDVIGKGGATIRALTEETGTTIELEDDGTVKIASANGEATKEAIRRI. The 69-residue stretch at 621–689 folds into the S1 motif domain; it reads GTVYNGKVVR…RQGRVRLSMK (69 aa).

The protein belongs to the polyribonucleotide nucleotidyltransferase family. Component of the RNA degradosome, which is a multiprotein complex involved in RNA processing and mRNA degradation. Requires Mg(2+) as cofactor.

The protein localises to the cytoplasm. The enzyme catalyses RNA(n+1) + phosphate = RNA(n) + a ribonucleoside 5'-diphosphate. Its function is as follows. Involved in mRNA degradation. Catalyzes the phosphorolysis of single-stranded polyribonucleotides processively in the 3'- to 5'-direction. The sequence is that of Polyribonucleotide nucleotidyltransferase from Shewanella woodyi (strain ATCC 51908 / MS32).